A 381-amino-acid polypeptide reads, in one-letter code: Glycerophosphocholine acyltransferase 1 (381 aa).

Residues 1–63 lie on the Cytoplasmic side of the membrane; sequence MANNEDSNSN…IAKQAEEHER (63 aa). A helical membrane pass occupies residues 64-84; it reads FINKVTHLVGVLGFGGFCFLL. Residues 85-89 are Lumenal-facing; it reads GARPQ. The helical transmembrane segment at 90-110 threads the bilayer; sequence DIPLVYCFFYVIFVPLRWIYY. Residues 111 to 116 lie on the Cytoplasmic side of the membrane; that stretch reads RFKKWH. The chain crosses the membrane as a helical span at residues 117–137; that stretch reads YYLLDFCYYANTIFLVDLLLY. Residues 138–141 lie on the Lumenal side of the membrane; that stretch reads PKNE. Residues 142–162 traverse the membrane as a helical segment; it reads KLFMVCFSFAEGPLAWAIIVW. Residues 163–173 are Cytoplasmic-facing; sequence RCSLVFSSPDK. A helical membrane pass occupies residues 174-194; sequence IVSVLIHLLPGLVFFTIRWWN. Topologically, residues 195 to 223 are lumenal; that stretch reads PATFAAMHPVGTDRRVSWPYVEDKAYLFT. Residues 224–244 form a helical membrane-spanning segment; sequence WLFLVPLVVYTLWQVLYFLIV. At 245–291 the chain is on the cytoplasmic side; that stretch reads NVLRRQRLLRDPEVMTSYRELSKKAEKANNKLWQLSGLLGDQNRIWM. Residues 292–312 traverse the membrane as a helical segment; the sequence is YILFQAIFTVATMALTVPIFL. The Lumenal portion of the chain corresponds to 313 to 315; the sequence is SYR. Residues 316–336 form a helical membrane-spanning segment; the sequence is LHVIFQILKISAAVWNGGSFL. The Cytoplasmic segment spans residues 337–381; it reads LEVMPRQVIQKEKKKKAEMQPIEEQILHHEAVSHPTENEPKSTET.

Belongs to the GPC1 family.

Its subcellular location is the membrane. It catalyses the reaction sn-glycerol 3-phosphocholine + an acyl-CoA = a 1-acyl-sn-glycero-3-phosphocholine + CoA. The catalysed reaction is sn-glycero-3-phosphoethanolamine + an acyl-CoA = a monoacyl-sn-glycero-3-phosphoethanolamine + CoA. The enzyme catalyses sn-glycerol 3-phosphocholine + (9Z)-octadecenoyl-CoA = (9Z-octadecenoyl)-sn-glycero-3-phosphocholine + CoA. Functionally, glycerophosphocholine acyltransferase (GPCAT) that utilizes acyl-CoA to acylate glycero-3-phosphocholine (GPC), forming lysophosphatidylcholine (LPC). Shows broad acyl specificities with a preference for 16:0-CoA, polyunsaturated acyl-CoA, and the hydroxylated ricinoleoyl-CoA. Also catalyzes the acylation of glycero-3-phosphoethanolamine (GPE) with acyl-CoA. In addition to acyl-CoA, GPCAT efficiently utilizes LPC and lysophosphatidylethanolamine (LPE) as acyl donors in the acylation of GPC. Contributes to the maintenance of phosphatidylcholine (PC) homeostasis and might also have specific functions in acyl editing of PC, such as transferring acyl groups modified at the sn-2 position of PC to the sn-1. This chain is Glycerophosphocholine acyltransferase 1, found in Arabidopsis thaliana (Mouse-ear cress).